Consider the following 134-residue polypeptide: Transcription antitermination protein NusB (134 aa).

The protein belongs to the NusB family.

Involved in transcription antitermination. Required for transcription of ribosomal RNA (rRNA) genes. Binds specifically to the boxA antiterminator sequence of the ribosomal RNA (rrn) operons. The sequence is that of Transcription antitermination protein NusB from Shewanella amazonensis (strain ATCC BAA-1098 / SB2B).